A 284-amino-acid polypeptide reads, in one-letter code: F-box protein PP2-B13 (284 aa).

Residues 1 to 44 (MMMLPEACVANILAFTSPADAFSSSEVSSVFRLAGDSDFVWEKF) enclose the F-box domain.

In Arabidopsis thaliana (Mouse-ear cress), this protein is F-box protein PP2-B13 (PP2B13).